We begin with the raw amino-acid sequence, 2032 residues long: Cytoskeleton-associated protein 5 (2032 aa).

TOG stretches follow at residues 1-223 (MGDD…KLPT) and 268-502 (YELL…LIHG). Lysine 48 is subject to N6-acetyllysine. HEAT repeat units follow at residues 159-197 (IILL…WIRD), 356-394 (GQYA…TTTL), and 434-472 (KSLL…VVGE). Residues 516 to 579 (PLPGRTAASG…GTKNKKGLET (64 aa)) form a disordered region. The segment covering 543–554 (LKKAPAAKAGGP) has biased composition (low complexity). Residues 588–817 (SIEVCEEKAS…EFEKMQGQSP (230 aa)) form a TOG 3 region. The stretch at 750 to 788 (GLNVKAFISNVKTALAATNPAVRTAAITLLGVMYLYVGP) is one HEAT 4 repeat. The disordered stretch occupies residues 811 to 851 (KMQGQSPPAPTRGISKHSTSGTDEGEDGDEPDDGSNDVVDL). Phosphoserine occurs at positions 816 and 845. Positions 833-845 (DEGEDGDEPDDGS) are enriched in acidic residues. TOG regions lie at residues 853-1081 (PRTE…VNMP) and 1193-1428 (IEQL…KRPS). HEAT repeat units follow at residues 855–893 (TEIS…DAKF), 936–974 (KQHV…QTGM), and 1013–1051 (PTDL…HLGY). Residues 1077–1160 (KVNMPAKPAP…KEDEDKSGPI (84 aa)) are disordered. HEAT repeat units follow at residues 1284-1322 (ENEA…VYPA), 1324-1357 (KMFP…SYGM), and 1361-1399 (QPTP…VHGD). Residues 1422 to 1443 (RSAKRPSAAPIKQVEEKPQRAQ) form a disordered region. At serine 1469 the chain carries Phosphoserine. The interval 1801-1822 (SMDQTGSKSDKETEKGASRIDE) is disordered. Positions 1808–1822 (KSDKETEKGASRIDE) are enriched in basic and acidic residues. Serine 1861 carries the phosphoserine modification. Residues 1932 to 1957 (PSVYLERLKILRQRCGLDNTKQDDRP) form an interaction with TACC3 region. A disordered region spans residues 1949–2032 (DNTKQDDRPP…RLERIKSSRK (84 aa)). Over residues 1971–1983 (VASSTDMLHSKLS) the composition is skewed to polar residues. Residues 1984–1997 (QLRESREQHQHSDL) show a composition bias toward basic and acidic residues. Residues 2002–2014 (THSSGTVTSSSST) show a composition bias toward low complexity. A compositionally biased stretch (basic and acidic residues) spans 2018-2032 (DDLKKRLERIKSSRK).

This sequence belongs to the TOG/XMAP215 family. Interacts with TACC1. Interacts with SLAIN2 and SLAIN1. Interacts with HNRNPA2B1. Interacts with TACC3 independently of clathrin. Interacts with TACC3 and clathrin forming the TACC3/ch-TOG/clathrin complex located at spindle inter-microtubules bridges. Interacts with NDC80; indicative for an association with the NDC80 complex. In terms of tissue distribution, overexpressed in hepatomas and colonic tumors. Also expressed in skeletal muscle, brain, heart, placenta, lung, liver, kidney and pancreas. Expression is elevated in the brain; highly expressed in the Purkinje cell bodies of the cerebellum.

The protein resides in the cytoplasm. It is found in the cytoskeleton. It localises to the microtubule organizing center. The protein localises to the centrosome. Its subcellular location is the spindle pole. The protein resides in the spindle. It is found in the chromosome. It localises to the centromere. The protein localises to the kinetochore. Functionally, binds to the plus end of microtubules and regulates microtubule dynamics and microtubule organization. Acts as a processive microtubule polymerase. Promotes cytoplasmic microtubule nucleation and elongation. Plays a major role in organizing spindle poles. In spindle formation protects kinetochore microtubules from depolymerization by KIF2C and has an essential role in centrosomal microtubule assembly independently of KIF2C activity. Contributes to centrosome integrity. Acts as a component of the TACC3/ch-TOG/clathrin complex proposed to contribute to stabilization of kinetochore fibers of the mitotic spindle by acting as inter-microtubule bridge. The TACC3/ch-TOG/clathrin complex is required for the maintenance of kinetochore fiber tension. Enhances the strength of NDC80 complex-mediated kinetochore-tip microtubule attachments. The polypeptide is Cytoskeleton-associated protein 5 (CKAP5) (Homo sapiens (Human)).